Here is a 668-residue protein sequence, read N- to C-terminus: DNA ligase (668 aa).

NAD(+) contacts are provided by residues 35–39 (DQEYD), 84–85 (SL), and glutamate 115. Lysine 117 functions as the N6-AMP-lysine intermediate in the catalytic mechanism. Residues arginine 138, glutamate 172, lysine 288, and lysine 312 each coordinate NAD(+). The Zn(2+) site is built by cysteine 406, cysteine 409, cysteine 425, and cysteine 430. Residues 589-668 (KLEGPLKGLV…EEFFDKYGES (80 aa)) form the BRCT domain.

It belongs to the NAD-dependent DNA ligase family. LigA subfamily. Mg(2+) is required as a cofactor. Requires Mn(2+) as cofactor.

It catalyses the reaction NAD(+) + (deoxyribonucleotide)n-3'-hydroxyl + 5'-phospho-(deoxyribonucleotide)m = (deoxyribonucleotide)n+m + AMP + beta-nicotinamide D-nucleotide.. Functionally, DNA ligase that catalyzes the formation of phosphodiester linkages between 5'-phosphoryl and 3'-hydroxyl groups in double-stranded DNA using NAD as a coenzyme and as the energy source for the reaction. It is essential for DNA replication and repair of damaged DNA. This chain is DNA ligase, found in Petrotoga mobilis (strain DSM 10674 / SJ95).